We begin with the raw amino-acid sequence, 652 residues long: Endoplasmic reticulum chaperone BiP (652 aa).

The first 16 residues, 1 to 16, serve as a signal peptide directing secretion; the sequence is MRHLLLALLLLGGARA. Residues 34–37, Lys94, 225–227, 291–298, and 362–365 each bind ATP; these read GTTY, GGT, EKAKRALS, and GSTR. Residues 123–278 are nucleotide-binding (NBD); sequence KPHIQVDVGG…KKKTGKDVRK (156 aa). The tract at residues 407–417 is interdomain linker; sequence QDTGDLVLLDV. A substrate-binding (SBD) region spans residues 418 to 498; sequence CPLTLGIETV…PRGVPQIEVT (81 aa). Residues 630 to 652 form a disordered region; that stretch reads SKLYGSAGPPPTGEEEAAEKDEL. Residues 642-652 are compositionally biased toward acidic residues; the sequence is GEEEAAEKDEL. The short motif at 649–652 is the Prevents secretion from ER element; the sequence is KDEL.

This sequence belongs to the heat shock protein 70 family. As to quaternary structure, monomer and homooligomer; homooligomerization via the interdomain linker inactivates the chaperone activity and acts as a storage of HSPA5/BiP molecules. Interacts with DNAJC10. Interacts with DNAJB9/ERdj4; leading to recruit HSPA5/BiP to ERN1/IRE1. Interacts with ERN1/IRE1; interaction takes place following interaction with DNAJB9/ERdj4 and leads to inactivate ERN1/IRE1.

The protein resides in the endoplasmic reticulum lumen. It is found in the melanosome. It localises to the cytoplasm. The protein localises to the cell surface. The catalysed reaction is ATP + H2O = ADP + phosphate + H(+). The chaperone activity is regulated by ATP-induced allosteric coupling of the nucleotide-binding (NBD) and substrate-binding (SBD) domains. In the ADP-bound and nucleotide-free (apo) states, the two domains have little interaction. In contrast, in the ATP-bound state the two domains are tightly coupled, which results in drastically accelerated kinetics in both binding and release of polypeptide substrates. J domain-containing co-chaperones (DNAJB9/ERdj4 or DNAJC10/ERdj5) stimulate the ATPase activity and are required for efficient substrate recognition by HSPA5/BiP. Homooligomerization inactivates participating HSPA5/BiP protomers and probably act as reservoirs to store HSPA5/BiP molecules when they are not needed by the cell. Its function is as follows. Endoplasmic reticulum chaperone that plays a key role in protein folding and quality control in the endoplasmic reticulum lumen. Involved in the correct folding of proteins and degradation of misfolded proteins via its interaction with DNAJC10/ERdj5, probably to facilitate the release of DNAJC10/ERdj5 from its substrate. Acts as a key repressor of the EIF2AK3/PERK and ERN1/IRE1-mediated unfolded protein response (UPR). In the unstressed endoplasmic reticulum, recruited by DNAJB9/ERdj4 to the luminal region of ERN1/IRE1, leading to disrupt the dimerization of ERN1/IRE1, thereby inactivating ERN1/IRE1. Also binds and inactivates EIF2AK3/PERK in unstressed cells. Accumulation of misfolded protein in the endoplasmic reticulum causes release of HSPA5/BiP from ERN1/IRE1 and EIF2AK3/PERK, allowing their homodimerization and subsequent activation. May also play a role in apoptosis and cell proliferation. The protein is Endoplasmic reticulum chaperone BiP of Gallus gallus (Chicken).